We begin with the raw amino-acid sequence, 170 residues long: NADH-quinone oxidoreductase subunit B (170 aa).

Cys42, Cys43, Cys107, and Cys136 together coordinate [4Fe-4S] cluster.

It belongs to the complex I 20 kDa subunit family. In terms of assembly, NDH-1 is composed of 14 different subunits. Subunits NuoB, C, D, E, F, and G constitute the peripheral sector of the complex. [4Fe-4S] cluster serves as cofactor.

It localises to the cell inner membrane. The catalysed reaction is a quinone + NADH + 5 H(+)(in) = a quinol + NAD(+) + 4 H(+)(out). Its function is as follows. NDH-1 shuttles electrons from NADH, via FMN and iron-sulfur (Fe-S) centers, to quinones in the respiratory chain. The immediate electron acceptor for the enzyme in this species is believed to be ubiquinone. Couples the redox reaction to proton translocation (for every two electrons transferred, four hydrogen ions are translocated across the cytoplasmic membrane), and thus conserves the redox energy in a proton gradient. In Campylobacter curvus (strain 525.92), this protein is NADH-quinone oxidoreductase subunit B.